An 86-amino-acid chain; its full sequence is UPF0335 protein BR1752/BS1330_I1746 (86 aa).

Belongs to the UPF0335 family.

The sequence is that of UPF0335 protein BR1752/BS1330_I1746 from Brucella suis biovar 1 (strain 1330).